Consider the following 264-residue polypeptide: 3-methyl-2-oxobutanoate hydroxymethyltransferase (264 aa).

Residues D45 and D84 each contribute to the Mg(2+) site. 3-methyl-2-oxobutanoate contacts are provided by residues 45–46 (DS), D84, and K112. E114 contacts Mg(2+). The active-site Proton acceptor is the E181.

This sequence belongs to the PanB family. As to quaternary structure, homodecamer; pentamer of dimers. It depends on Mg(2+) as a cofactor.

The protein localises to the cytoplasm. It carries out the reaction 3-methyl-2-oxobutanoate + (6R)-5,10-methylene-5,6,7,8-tetrahydrofolate + H2O = 2-dehydropantoate + (6S)-5,6,7,8-tetrahydrofolate. The protein operates within cofactor biosynthesis; (R)-pantothenate biosynthesis; (R)-pantoate from 3-methyl-2-oxobutanoate: step 1/2. Its function is as follows. Catalyzes the reversible reaction in which hydroxymethyl group from 5,10-methylenetetrahydrofolate is transferred onto alpha-ketoisovalerate to form ketopantoate. The protein is 3-methyl-2-oxobutanoate hydroxymethyltransferase of Escherichia coli O157:H7.